A 611-amino-acid polypeptide reads, in one-letter code: Guanylate-binding protein 6 (611 aa).

The segment at 1–308 is GTPase domain (Globular); the sequence is MTQPQMAPIC…NAINSGAVPC (308 aa). One can recognise a GB1/RHD3-type G domain in the interval 33–275; that stretch reads SQPVVVVAIV…FVSYIFTYAK (243 aa). GTP is bound by residues 43–50, 65–67, and 95–99; these read GLYRTGKS, LGS, and DTEGL.

It belongs to the TRAFAC class dynamin-like GTPase superfamily. GB1/RHD3 GTPase family. GB1 subfamily.

The protein resides in the cytoplasmic vesicle. The catalysed reaction is GTP + H2O = GDP + phosphate + H(+). Interferon (IFN)-inducible GTPase that plays important roles in innate immunity against a diverse range of bacterial, viral and protozoan pathogens, such as bacterial pathogens Listeria monocytogenes and Mycobacterium bovis BCG as well as the protozoan pathogen Toxoplasma gondii. Confers protection to several pathogens, including the bacterial pathogens Listeria monocytogenes and Mycobacterium bovis BCG as well as the protozoan pathogen Toxoplasma gondii. In Mus musculus (Mouse), this protein is Guanylate-binding protein 6 (Gbp6).